We begin with the raw amino-acid sequence, 627 residues long: Mitochondrial distribution and morphology protein 34 (627 aa).

In terms of domain architecture, SMP-LTD spans 1–195 (MAFNFNWSPL…LPAIIHRLSL (195 aa)). Disordered regions lie at residues 209 to 230 (SAQVTNPSLDGPGLDPLLNPPQ), 332 to 470 (ASLA…RTSP), 486 to 557 (LQRQ…SRPS), and 586 to 627 (RIQD…AYRH). Composition is skewed to low complexity over residues 215 to 225 (PSLDGPGLDPL) and 332 to 341 (ASLASSSHSR). Residues 360–372 (RHSKAHARKRKKR) are compositionally biased toward basic residues. Over residues 373–384 (VVDLRRRPKSAD) the composition is skewed to basic and acidic residues. Residues 390 to 412 (SGESAYTETSTTTSAVSVFSGST) show a composition bias toward low complexity. Residues 436–451 (TLRDRIAARDDAERNS) are compositionally biased toward basic and acidic residues. The span at 528–557 (PNASNNYTSSSSPSARDPQQQQPQQLSRPS) shows a compositional bias: low complexity.

This sequence belongs to the MDM34 family. As to quaternary structure, component of the ER-mitochondria encounter structure (ERMES) or MDM complex, composed of MMM1, MDM10, MDM12 and MDM34.

It localises to the mitochondrion outer membrane. Functionally, component of the ERMES/MDM complex, which serves as a molecular tether to connect the endoplasmic reticulum (ER) and mitochondria. Components of this complex are involved in the control of mitochondrial shape and protein biogenesis, and function in nonvesicular lipid trafficking between the ER and mitochondria. MDM34 is required for the interaction of the ER-resident membrane protein MMM1 and the outer mitochondrial membrane-resident beta-barrel protein MDM10. The polypeptide is Mitochondrial distribution and morphology protein 34 (Blastomyces gilchristii (strain SLH14081) (Blastomyces dermatitidis)).